A 425-amino-acid polypeptide reads, in one-letter code: Serine--tRNA ligase (425 aa).

Residue 229 to 231 (TSE) participates in L-serine binding. ATP is bound by residues 259 to 261 (RKE) and Val-275. An L-serine-binding site is contributed by Glu-282. 349-352 (EITS) is a binding site for ATP. Thr-384 lines the L-serine pocket.

This sequence belongs to the class-II aminoacyl-tRNA synthetase family. Type-1 seryl-tRNA synthetase subfamily. In terms of assembly, homodimer. The tRNA molecule binds across the dimer.

It localises to the cytoplasm. It catalyses the reaction tRNA(Ser) + L-serine + ATP = L-seryl-tRNA(Ser) + AMP + diphosphate + H(+). The catalysed reaction is tRNA(Sec) + L-serine + ATP = L-seryl-tRNA(Sec) + AMP + diphosphate + H(+). The protein operates within aminoacyl-tRNA biosynthesis; selenocysteinyl-tRNA(Sec) biosynthesis; L-seryl-tRNA(Sec) from L-serine and tRNA(Sec): step 1/1. Its function is as follows. Catalyzes the attachment of serine to tRNA(Ser). Is also able to aminoacylate tRNA(Sec) with serine, to form the misacylated tRNA L-seryl-tRNA(Sec), which will be further converted into selenocysteinyl-tRNA(Sec). This is Serine--tRNA ligase from Borreliella afzelii (strain PKo) (Borrelia afzelii).